Reading from the N-terminus, the 204-residue chain is Venom allergen 5 (204 aa).

Disulfide bonds link Cys4/Cys17, Cys8/Cys101, Cys26/Cys94, and Cys170/Cys187. One can recognise an SCP domain in the interval 45-189 (LKEHNDFRQK…WHKHYLVCNY (145 aa)).

It belongs to the CRISP family. Venom allergen 5-like subfamily. In terms of tissue distribution, expressed by the venom gland.

The protein resides in the secreted. In terms of biological role, may have an ancestral function in the promotion of ovum fertilization by sperm. The sequence is that of Venom allergen 5 from Vespula flavopilosa (Downy yellowjacket).